Here is a 150-residue protein sequence, read N- to C-terminus: Ribosome-binding factor A (150 aa).

Residues 126–150 (EVARDLSHDDDEDGGADEAPRNGDE) are disordered.

This sequence belongs to the RbfA family. Monomer. Binds 30S ribosomal subunits, but not 50S ribosomal subunits or 70S ribosomes.

It is found in the cytoplasm. Functionally, one of several proteins that assist in the late maturation steps of the functional core of the 30S ribosomal subunit. Associates with free 30S ribosomal subunits (but not with 30S subunits that are part of 70S ribosomes or polysomes). Required for efficient processing of 16S rRNA. May interact with the 5'-terminal helix region of 16S rRNA. In Brucella abortus (strain S19), this protein is Ribosome-binding factor A.